Reading from the N-terminus, the 372-residue chain is Alanine dehydrogenase 2 (372 aa).

H95 is an active-site residue. Residue 169–199 (KVTIIGGGQAGTNAAKIALGLGADVTILDVN) coordinates NAD(+).

This sequence belongs to the AlaDH/PNT family.

The enzyme catalyses L-alanine + NAD(+) + H2O = pyruvate + NH4(+) + NADH + H(+). Its pathway is amino-acid degradation; L-alanine degradation via dehydrogenase pathway; NH(3) and pyruvate from L-alanine: step 1/1. Functionally, may play a role in cell wall synthesis as L-alanine is an important constituent of the peptidoglycan layer. The chain is Alanine dehydrogenase 2 (ald2) from Staphylococcus aureus (strain MRSA252).